We begin with the raw amino-acid sequence, 523 residues long: Katanin p60 ATPase-containing subunit A1 (523 aa).

Positions 82-215 (KEAPTGRRAA…DGKSKRGLYE (134 aa)) are disordered. The segment covering 178–194 (AGARSSTAGKKGAASKS) has biased composition (low complexity). 279 to 286 (GPPGTGKT) is an ATP binding site.

This sequence belongs to the AAA ATPase family. Katanin p60 subunit A1 subfamily. As to quaternary structure, may homooligomerize. Component of KTN80-KTN1 complexes composed of a hexamer of KTN1-KTN80 heterodimers that sense microtubule (MT) geometry to confer precise MT severing. Interacts directly with KTN80.1, KTN80.2, KTN80.3 and KTN80.4. Can interact with KTN80.1. May interact with the kinesin related protein KIN14A. Interacts with microtubule polymers. Binds to IPGA1. As to expression, expressed ubiquitously, including siliques, flowers, leaves, stems and roots.

The protein resides in the cytoplasm. The protein localises to the cytoskeleton. It carries out the reaction n ATP + n H2O + a microtubule = n ADP + n phosphate + (n+1) alpha/beta tubulin heterodimers.. Its function is as follows. Severs microtubules in vitro in an ATP-dependent manner. Required for oligomerization of functional KTN80-KTN1 complexes that catalyze microtubule severing. This activity may promote rapid reorganization of cellular microtubule arrays. May be required for reorientation of cortical microtubule arrays during cellular elongation. Failure to correctly orient these arrays drastically compromises fiber length, cell wall thickness and mechanical strength. May also be required for the spatial organization of developmental cues within the root. Involved in the IPGA1- and AN-dependent regulation of pavement cells morphogenesis leading to puzzle shape. The sequence is that of Katanin p60 ATPase-containing subunit A1 from Arabidopsis thaliana (Mouse-ear cress).